Here is a 1577-residue protein sequence, read N- to C-terminus: MILLHFVYSLWALLLIPLINAEEFTPKVTKTIAQDSFEILSFDDSNTLIRKQDASVTISFDDGETWEKVEGIEDEITWIYIDPFNRHDRAVATSMYESRLYITNDQGKSWERITLPDSEKNISSRGCYIETHPLNKNYFLAKCNYCEKTEVDNEENSGDEEGAPVIFNITHCTDKVFASNDGGKSFSEIKSSLERNENSAISISDCGFAKTGKDSDLESSDTSIICLFQNMQLIMDEFSSPYTESKLVLTTDWGKSLKEFDQFKDKVVNGYRILKSHMVVITQGDRYNDMSSMDVWVSNDLSNFKMAYMPTQLRHSMQGEIYEDAMGRIILPMSRERSDQEEDKGIVSEILISDSQGLKFSPIPWTANEVFGYINLYQPTYLKGTMIASLYPLSRRRNRKGKAKGVKNKGVTKISVDNGLTWTVLKVVDPDNADSFDCDITDFENCSLQNMFYTREGSTPTAGILMTTGIVGDGSVFDWGDQRTFISRDGGLTWKLAFDFPCLYAVGDYGNVIVAIPYNADEDDDPQSEFYYSLDQGKTWTEYQLETTIYPNEVMNTTPDGSGAKFILNGFTLAHMDGTTNFIYAIDFSTAFNDKTCEENDFEDWNLAEGKCVNGVKYKIRRRKQDAQCLVKKVFEDLQLFETACDKCTEADYECAFEFVRDATGKCVPDYNLIVLSDVCDKTKKKTVPVKPLQLVKGDKCKKPMTVKSVDISCEGVPKKGTNDKEIVVTENKFDFKIQFYQYFDTVTDESLLMINSRGEAYISHDGGQTIRRVDSNGETIIEVVFNPYYNSSAYLFGSKGSIFSTHDRGYSFMTAKLPEARQLGMPLDFNAKAQDTFIYYGGKNCESILSPECHAVAYLTNDGGETFTEMLDNAIHCEFAGSLFKYPSNEDMVMCQVKEKSSQTRSLVSSTDFFQDDKNTVFENIIGYLSTGGYIIVAVPHENNELRAYVTIDGTEFAEAKFPYDEDVGKQEAFTILESEKGSIFLHLATNLVPGRDFGNLLKSNSNGTSFVTLEHAVNRNTFGYVDFEKIQGLEGIILTNIVSNSDKVAENKEDKQLKTKITFNEGSDWNFLKPPKRDSEGKKFSCSSKSLDECSLHLHGYTERKDIRDTYSSGSALGMMFGVGNVGPNLLPYKECSTFFTTDGGETWAEVKKTPHQWEYGDHGGILVLVPENSETDSISYSTDFGKTWKDYKFCADKVLVKDITTVPRDSALRFLLFGEAADIGGSSFRTYTIDFRNIFERQCDFDITGKESADYKYSPLSSKSNCLFGHQTEFLRKTDENCFIGNIPLSEFSRNIKNCSCTRQDFECDYNFYKANDGTCKLVKGLSPANAADVCKKEPDLIEYFESSGYRKIPLSTCEGGLKLDAPSSPHACPGKEKEFKEKYSVSAGPFAFIFISILLIIFFAAWFVYDRGIRRNGGFARFGEIRLGDDGLIENNNTDRVVNNIVKSGFYVFSNIGSLLQHTKTNIAHVISKIRERFGNRTGPSYSSLIHDQFLDEADDLLAGHDEDANDLSSFMDQGSNFEIEEDDVPTLEEEHTSYTDQPTTTDVPDALPEGNEENIDRPDSTAPSNENQ.

Residues 1-21 (MILLHFVYSLWALLLIPLINA) form the signal peptide. Residues 22–1391 (EEFTPKVTKT…EFKEKYSVSA (1370 aa)) are Lumenal-facing. 2 BNR repeats span residues 58 to 68 (ISFDDGETWEK) and 101 to 111 (YITNDQGKSWE). N121 and N168 each carry an N-linked (GlcNAc...) asparagine glycan. 2 BNR repeats span residues 179–187 (SNDGGKSFS) and 414–423 (ISVDNGLTWT). N445 is a glycosylation site (N-linked (GlcNAc...) asparagine). BNR repeat units follow at residues 485–495 (FISRDGGLTWK), 531–541 (YYSLDQGKTWT), and 762–771 (YISHDGGQTI). An N-linked (GlcNAc...) asparagine glycan is attached at N791. The BNR 8 repeat unit spans residues 859–869 (YLTNDGGETFT). N-linked (GlcNAc...) asparagine glycosylation is present at N1008. BNR repeat units lie at residues 1141–1150 (FFTTDGGETW) and 1183–1192 (YSTDFGKTWK). N1301 carries N-linked (GlcNAc...) asparagine glycosylation. The chain crosses the membrane as a helical span at residues 1392 to 1412 (GPFAFIFISILLIIFFAAWFV). At 1413–1577 (YDRGIRRNGG…DSTAPSNENQ (165 aa)) the chain is on the cytoplasmic side. The tract at residues 1531-1577 (DDVPTLEEEHTSYTDQPTTTDVPDALPEGNEENIDRPDSTAPSNENQ) is disordered.

It belongs to the VPS10-related sortilin family.

Its subcellular location is the golgi apparatus. It is found in the trans-Golgi network membrane. It localises to the prevacuolar compartment membrane. Its function is as follows. Functions as a sorting receptor in the Golgi compartment required for the intracellular sorting and delivery of soluble vacuolar proteins, like carboxypeptidase Y (CPY) and proteinase A. Executes multiple rounds of sorting by cycling between the late Golgi and a prevacuolar endosome-like compartment. Binds the Golgi-modified P2 form of CPY, and this interaction is dependent on the presence of an intact CPY vacuolar protein sorting signal. The chain is Vacuolar protein sorting/targeting protein PEP1 (PEP1) from Saccharomyces cerevisiae (strain Lalvin EC1118 / Prise de mousse) (Baker's yeast).